A 142-amino-acid chain; its full sequence is Large ribosomal subunit protein uL11 (142 aa).

Belongs to the universal ribosomal protein uL11 family. In terms of assembly, part of the ribosomal stalk of the 50S ribosomal subunit. Interacts with L10 and the large rRNA to form the base of the stalk. L10 forms an elongated spine to which L12 dimers bind in a sequential fashion forming a multimeric L10(L12)X complex. In terms of processing, one or more lysine residues are methylated.

Forms part of the ribosomal stalk which helps the ribosome interact with GTP-bound translation factors. This is Large ribosomal subunit protein uL11 from Shewanella sediminis (strain HAW-EB3).